A 556-amino-acid polypeptide reads, in one-letter code: Glypican-4 (556 aa).

A signal peptide spans M1–A18. A Phosphoserine modification is found at S357. 3 O-linked (Xyl...) (glycosaminoglycan) serine glycosylation sites follow: S494, S498, and S500. N-linked (GlcNAc...) asparagine glycosylation is present at N514. Residue S529 is the site of GPI-anchor amidated serine attachment. Residues A530–R556 constitute a propeptide, removed in mature form.

This sequence belongs to the glypican family.

It is found in the cell membrane. The protein resides in the secreted. Its subcellular location is the extracellular space. Functionally, cell surface proteoglycan that bears heparan sulfate. May be involved in the development of kidney tubules and of the central nervous system. This is Glypican-4 (GPC4) from Homo sapiens (Human).